The sequence spans 267 residues: Hydrolase FUB4 (267 aa).

Catalysis depends on charge relay system residues serine 93, aspartate 183, and histidine 243.

The protein belongs to the AB hydrolase 3 family.

It functions in the pathway mycotoxin biosynthesis. Hydrolase; part of the gene cluster that mediates the biosynthesis of fusaric acid, a mycotoxin with low to moderate toxicity to animals and humans, but with high phytotoxic properties. L-aspartate is suggested as fusaric acid amino acid precursor that is activated and further processed to O-acetyl-L-homoserine by cluster enzymes aspartate kinase FUB3 and homoserine O-acetyltransferase FUB5, as well as enzymes of the primary metabolism. The polyketide synthase (PKS) FUB1 generates the triketide trans-2-hexenal which is presumptively released by the hydrolase FUB4 and linked to the NRPS-bound amino acid precursor by NAD(P)-dependent dehydrogenase FUB6. FUB1, FUB4, and the non-canonical NRPS Fub8 may form an enzyme complex. Further processing of the NRPS-bound intermediate might be carried out by FUB6 and the sulfhydrylase FUB7, enabling a spontaneous electrocyclization to close the carbon backbone of fusaric acid. Dihydrofusaric acid is likely to be released via reduction by the thioester reductase (TR) domain of FUB8 whereupon the final oxidation to fusaric acid may (also) be performed by the FMN-dependent dehydrogenase FUB9. The chain is Hydrolase FUB4 from Fusarium oxysporum f. sp. lycopersici (strain 4287 / CBS 123668 / FGSC 9935 / NRRL 34936) (Fusarium vascular wilt of tomato).